Reading from the N-terminus, the 975-residue chain is Translation initiation factor IF-2 (975 aa).

Over residues 48 to 63 (DHLRKSHGATDGDKRK) the composition is skewed to basic and acidic residues. Disordered stretches follow at residues 48-84 (DHLRKSHGATDGDKRKITLTRRHTSEIKQADATGKAR) and 98-388 (KRDD…QAPT). Low complexity predominate over residues 104–115 (ETGADQAQAQTD). Positions 120-177 (AELKRREEEARREAELLEKQAQELRERQERLEREEAERRAREEAAEAERRRAEEEAAA) are enriched in basic and acidic residues. Positions 178–211 (KRAAAAQAEAAQQAAAAREQAQRAQSEPAEQSAQ) are enriched in low complexity. The segment covering 212–263 (DEARAAAERAAQREAAKKAEDAAREAADKARAEQEEIRKRREAAEAEARAIR) has biased composition (basic and acidic residues). Positions 302 to 330 (KPAGEAAAARPAAKKPASGAPAPAAAPAG) are enriched in low complexity. The span at 359–372 (SSGGVDRGWRGGPK) shows a compositional bias: gly residues. Residues 475–644 (PRPPVVTVMG…LLQAEVLELK (170 aa)) enclose the tr-type G domain. The interval 484 to 491 (GHVDHGKT) is G1. GTP is bound at residue 484–491 (GHVDHGKT). The G2 stretch occupies residues 509 to 513 (GITQH). The interval 530–533 (DTPG) is G3. GTP-binding positions include 530 to 534 (DTPGH) and 584 to 587 (NKID). The tract at residues 584-587 (NKID) is G4. A G5 region spans residues 620–622 (SAK).

This sequence belongs to the TRAFAC class translation factor GTPase superfamily. Classic translation factor GTPase family. IF-2 subfamily.

It localises to the cytoplasm. Its function is as follows. One of the essential components for the initiation of protein synthesis. Protects formylmethionyl-tRNA from spontaneous hydrolysis and promotes its binding to the 30S ribosomal subunits. Also involved in the hydrolysis of GTP during the formation of the 70S ribosomal complex. In Burkholderia mallei (strain NCTC 10247), this protein is Translation initiation factor IF-2.